Reading from the N-terminus, the 495-residue chain is ATP synthase subunit beta, chloroplastic (495 aa).

An ATP-binding site is contributed by 172-179 (GGAGVGKT).

Belongs to the ATPase alpha/beta chains family. F-type ATPases have 2 components, CF(1) - the catalytic core - and CF(0) - the membrane proton channel. CF(1) has five subunits: alpha(3), beta(3), gamma(1), delta(1), epsilon(1). CF(0) has four main subunits: a(1), b(1), b'(1) and c(9-12).

It localises to the plastid. The protein resides in the chloroplast thylakoid membrane. The enzyme catalyses ATP + H2O + 4 H(+)(in) = ADP + phosphate + 5 H(+)(out). Functionally, produces ATP from ADP in the presence of a proton gradient across the membrane. The catalytic sites are hosted primarily by the beta subunits. This chain is ATP synthase subunit beta, chloroplastic, found in Brimeura amethystina (Spanish hyacinth).